The chain runs to 126 residues: Profilin-3 (126 aa).

The protein belongs to the profilin family. Occurs in many kinds of cells as a complex with monomeric actin in a 1:1 ratio.

It localises to the cytoplasm. Its subcellular location is the cytoskeleton. Binds to actin and affects the structure of the cytoskeleton. At high concentrations, profilin prevents the polymerization of actin, whereas it enhances it at low concentrations. By binding to PIP2, it inhibits the formation of IP3 and DG. This is Profilin-3 (proC) from Dictyostelium discoideum (Social amoeba).